The primary structure comprises 97 residues: MTKKKRENLGVAQEIDGLEEKLSRCRKDLEAVTSQLYRAELSPEDRRSLEKEKHTLMNKASKYEKELKLLRHENRKNTLLSVAIFTVFALLYAYWTM.

A coiled-coil region spans residues 2–78; that stretch reads TKKKRENLGV…LLRHENRKNT (77 aa). A helical membrane pass occupies residues 78–95; the sequence is TLLSVAIFTVFALLYAYW.

It localises to the membrane. The sequence is that of Coiled-coil domain-containing protein 167 (Ccdc167) from Mus musculus (Mouse).